The chain runs to 398 residues: MAKEKYDRSKPHVNIGTIGHVDHGKTTLTAAITTVLARRLPSSVNQPKDYASIDAAPEERERGITINTAHVEYETATRHYAHIDAPGHADYVKNMITGAAQMDGAILVVASTDGPMPQTREHILLSRQVGVKHLIVFMNKVDLVDDEELLELVEMEIRDLLSEYDFPGDDLPVIQGSALKALEGDSKYEDIIMELMDTVDSYIPEPERDTDKPLLLPVEDVFSITGRGTVASGRIDRGTVRVNDEIEIVGIRDEIKKAVVTGVEMFRKQLDEGLAGDNVGVLLRGVQRDEIERGQVIAKPGSINPHTKFKGEVYILTKEEGGRHTPFFNNYRPQFYFRTTDVTGSIELPAGTEMVMPGDNVTIDVELIHPIAVEQGTTFSIREGGRTVGSGIVSEIEA.

A tr-type G domain is found at 10–207 (KPHVNIGTIG…TVDSYIPEPE (198 aa)). Positions 19–26 (GHVDHGKT) are G1. A GTP-binding site is contributed by 19-26 (GHVDHGKT). Position 26 (threonine 26) interacts with Mg(2+). The G2 stretch occupies residues 63 to 67 (GITIN). The interval 84 to 87 (DAPG) is G3. GTP contacts are provided by residues 84–88 (DAPGH) and 139–142 (NKVD). The tract at residues 139 to 142 (NKVD) is G4. A G5 region spans residues 177–179 (SAL).

The protein belongs to the TRAFAC class translation factor GTPase superfamily. Classic translation factor GTPase family. EF-Tu/EF-1A subfamily. In terms of assembly, monomer.

The protein resides in the cytoplasm. It catalyses the reaction GTP + H2O = GDP + phosphate + H(+). Functionally, GTP hydrolase that promotes the GTP-dependent binding of aminoacyl-tRNA to the A-site of ribosomes during protein biosynthesis. The protein is Elongation factor Tu of Streptococcus equi subsp. zooepidemicus (strain MGCS10565).